A 441-amino-acid chain; its full sequence is Tol-Pal system protein TolB (441 aa).

The first 23 residues, 1 to 23 (MRNAIATVLLGLAMLLPVGAVQA), serve as a signal peptide directing secretion. A disordered region spans residues 420–441 (RNLKPVKTPDGASDPSWSPLQN).

The protein belongs to the TolB family. The Tol-Pal system is composed of five core proteins: the inner membrane proteins TolA, TolQ and TolR, the periplasmic protein TolB and the outer membrane protein Pal. They form a network linking the inner and outer membranes and the peptidoglycan layer.

Its subcellular location is the periplasm. Its function is as follows. Part of the Tol-Pal system, which plays a role in outer membrane invagination during cell division and is important for maintaining outer membrane integrity. The sequence is that of Tol-Pal system protein TolB from Ruegeria sp. (strain TM1040) (Silicibacter sp.).